A 376-amino-acid polypeptide reads, in one-letter code: Phosphatidylinositol/phosphatidylcholine transfer protein SFH11 (376 aa).

The segment covering 1–20 (MQETDRDIHISDGTMNKEEQ) has biased composition (basic and acidic residues). The segment at 1-24 (MQETDRDIHISDGTMNKEEQSPNN) is disordered. Residues 92-266 (EYGEVKKHYP…FLGGNCTCSD (175 aa)) form the CRAL-TRIO domain. A coiled-coil region spans residues 323–357 (MEKYAALKTAVKDSQKRIEMLEISLHETKKVLNGL).

It belongs to the SFH family.

Its subcellular location is the golgi apparatus membrane. The protein resides in the cell membrane. In terms of biological role, required for transport of secretory proteins from the Golgi complex. Catalyzes the transfer of phosphatidylinositol and phosphatidylcholine between membranes in vitro. The polypeptide is Phosphatidylinositol/phosphatidylcholine transfer protein SFH11 (SFH11) (Arabidopsis thaliana (Mouse-ear cress)).